Consider the following 388-residue polypeptide: Chorismate synthase (388 aa).

Arginine 39 and arginine 45 together coordinate NADP(+). FMN contacts are provided by residues 132–134 (RSS), 251–252 (NA), glycine 296, 311–315 (KPIPT), and arginine 337.

This sequence belongs to the chorismate synthase family. As to quaternary structure, homotetramer. FMNH2 is required as a cofactor.

The catalysed reaction is 5-O-(1-carboxyvinyl)-3-phosphoshikimate = chorismate + phosphate. It functions in the pathway metabolic intermediate biosynthesis; chorismate biosynthesis; chorismate from D-erythrose 4-phosphate and phosphoenolpyruvate: step 7/7. In terms of biological role, catalyzes the anti-1,4-elimination of the C-3 phosphate and the C-6 proR hydrogen from 5-enolpyruvylshikimate-3-phosphate (EPSP) to yield chorismate, which is the branch point compound that serves as the starting substrate for the three terminal pathways of aromatic amino acid biosynthesis. This reaction introduces a second double bond into the aromatic ring system. The polypeptide is Chorismate synthase (Staphylococcus aureus (strain bovine RF122 / ET3-1)).